The chain runs to 704 residues: Transmembrane protein DDB_G0274347 (704 aa).

The segment at 37-145 (VEQRDEVNDE…NNYNNNNTPT (109 aa)) is disordered. Residues 43–67 (VNDEFQEEEEELEDDDDDEDDEDEI) are compositionally biased toward acidic residues. Positions 85–99 (HNDKEKEKKKDKQEE) are enriched in basic and acidic residues. A compositionally biased stretch (acidic residues) spans 100 to 113 (YIDSDDDDDDDGDE). Positions 114–142 (NYYLNNNNNNNNNINNNNNYNNNNYNNNN) are enriched in low complexity. The N-linked (GlcNAc...) asparagine glycan is linked to Asn-166. A helical transmembrane segment spans residues 255–275 (ALISMALLISLVAIIFYLPLP). An N-linked (GlcNAc...) asparagine glycan is attached at Asn-354. Helical transmembrane passes span 370–390 (LKIF…WLFA), 414–434 (TLLV…LYFI), and 513–533 (LVSF…FLIS). The segment covering 550-565 (TTTTTINTTTNTTSNT) has biased composition (low complexity). The tract at residues 550–576 (TTTTTINTTTNTTSNTSQQSNPLSKRL) is disordered. N-linked (GlcNAc...) asparagine glycans are attached at residues Asn-556, Asn-560, and Asn-564. The segment covering 566–576 (SQQSNPLSKRL) has biased composition (polar residues). 2 helical membrane-spanning segments follow: residues 609–629 (FIIV…GVPP) and 638–658 (IFFI…LIII).

The protein localises to the membrane. The polypeptide is Transmembrane protein DDB_G0274347 (Dictyostelium discoideum (Social amoeba)).